Reading from the N-terminus, the 490-residue chain is Aspartyl/glutamyl-tRNA(Asn/Gln) amidotransferase subunit B (490 aa).

Belongs to the GatB/GatE family. GatB subfamily. In terms of assembly, heterotrimer of A, B and C subunits.

The catalysed reaction is L-glutamyl-tRNA(Gln) + L-glutamine + ATP + H2O = L-glutaminyl-tRNA(Gln) + L-glutamate + ADP + phosphate + H(+). It carries out the reaction L-aspartyl-tRNA(Asn) + L-glutamine + ATP + H2O = L-asparaginyl-tRNA(Asn) + L-glutamate + ADP + phosphate + 2 H(+). In terms of biological role, allows the formation of correctly charged Asn-tRNA(Asn) or Gln-tRNA(Gln) through the transamidation of misacylated Asp-tRNA(Asn) or Glu-tRNA(Gln) in organisms which lack either or both of asparaginyl-tRNA or glutaminyl-tRNA synthetases. The reaction takes place in the presence of glutamine and ATP through an activated phospho-Asp-tRNA(Asn) or phospho-Glu-tRNA(Gln). The chain is Aspartyl/glutamyl-tRNA(Asn/Gln) amidotransferase subunit B from Burkholderia ambifaria (strain MC40-6).